Here is a 589-residue protein sequence, read N- to C-terminus: Putative adenine deaminase BC_3012 (589 aa).

This sequence belongs to the metallo-dependent hydrolases superfamily. Adenine deaminase family.

It catalyses the reaction adenine + H2O + H(+) = hypoxanthine + NH4(+). The chain is Putative adenine deaminase BC_3012 from Bacillus cereus (strain ATCC 14579 / DSM 31 / CCUG 7414 / JCM 2152 / NBRC 15305 / NCIMB 9373 / NCTC 2599 / NRRL B-3711).